Reading from the N-terminus, the 60-residue chain is RICYNHQSTTPATTKSCGENSCYKKTWSDHRGTIIERGCGCPKVKQGIHLHCCQSDKCNN.

4 cysteine pairs are disulfide-bonded: Cys3-Cys22, Cys17-Cys39, Cys41-Cys52, and Cys53-Cys58.

This sequence belongs to the three-finger toxin family. Short-chain subfamily. Type I alpha-neurotoxin sub-subfamily. As to expression, expressed by the venom gland.

The protein localises to the secreted. Binds to muscle nicotinic acetylcholine receptor (nAChR) and inhibit acetylcholine from binding to the receptor, thereby impairing neuromuscular transmission. In Dendroaspis jamesoni kaimosae (Eastern Jameson's mamba), this protein is Short neurotoxin 1.